Here is a 565-residue protein sequence, read N- to C-terminus: MQTKYIFVTGGVTSSLGKGIFSASLGRLLSDRGLDVTIQKFDPYINVDPGTMNPYEHGEVYVTNDGAETDLDLGHYERFLDQPTSQANNVTTGRVYMEVISKEREGAYLGKTVQVVPHIIDEIKHWMLKLGETGDYDVVITEIGGTVGDIEGQPYLEAIRQLRNELGPRNTMIAHLTLIPHLRAAGELKTKPTQHSVKELLAHGLQPDTIVCRSERSITAEVRRKISLFCNVEEEAVIQMLDAESIYEVPLLLRDEGTGELVVDRFYPKRGDENEKCSDTPDLSDWIGFLKRLKNPEETIPIALVGKYVEHQDAYKSITESFILAGVPDEVQVEVKYVPSEDLSPDTVESQLGDVAGVLVAPGFGDRGVEGKILAAQYAREHDVPFFGICLGLQCAIVEFARHVCGWDGAHSTEFDEDTAYPVIDLMEEQKEISDKGGTMRLGQYDCRIQDGSRAHEIYEADMVQERHRHRYEVNNVLRYKLLEEGMRFSGVNPDTDLVEIMELPDKRWFLGVQFHPEYRTTVGDPHPLFRSFVRACTAYAHEEDLVTSPQPPERKAVPLASVDM.

The interval 1 to 268 (MQTKYIFVTG…GELVVDRFYP (268 aa)) is amidoligase domain. Ser14 is a CTP binding site. Residue Ser14 participates in UTP binding. 15–20 (SLGKGI) serves as a coordination point for ATP. Residue Tyr55 participates in L-glutamine binding. Asp72 provides a ligand contact to ATP. The Mg(2+) site is built by Asp72 and Glu142. CTP-binding positions include 149–151 (DIE), 189–194 (KTKPTQ), and Lys225. UTP-binding positions include 189-194 (KTKPTQ) and Lys225. Residues 301 to 543 (PIALVGKYVE…VRACTAYAHE (243 aa)) enclose the Glutamine amidotransferase type-1 domain. Position 363 (Gly363) interacts with L-glutamine. Cys390 serves as the catalytic Nucleophile; for glutamine hydrolysis. L-glutamine contacts are provided by residues 391–394 (LGLQ), Glu414, and Arg471. Residues His516 and Glu518 contribute to the active site. A disordered region spans residues 545-565 (DLVTSPQPPERKAVPLASVDM).

The protein belongs to the CTP synthase family. As to quaternary structure, homotetramer.

The enzyme catalyses UTP + L-glutamine + ATP + H2O = CTP + L-glutamate + ADP + phosphate + 2 H(+). The catalysed reaction is L-glutamine + H2O = L-glutamate + NH4(+). It catalyses the reaction UTP + NH4(+) + ATP = CTP + ADP + phosphate + 2 H(+). The protein operates within pyrimidine metabolism; CTP biosynthesis via de novo pathway; CTP from UDP: step 2/2. Its activity is regulated as follows. Allosterically activated by GTP, when glutamine is the substrate; GTP has no effect on the reaction when ammonia is the substrate. The allosteric effector GTP functions by stabilizing the protein conformation that binds the tetrahedral intermediate(s) formed during glutamine hydrolysis. Inhibited by the product CTP, via allosteric rather than competitive inhibition. In terms of biological role, catalyzes the ATP-dependent amination of UTP to CTP with either L-glutamine or ammonia as the source of nitrogen. Regulates intracellular CTP levels through interactions with the four ribonucleotide triphosphates. This Salinibacter ruber (strain DSM 13855 / M31) protein is CTP synthase.